The sequence spans 714 residues: DNA gyrase subunit B (714 aa).

The region spanning 492 to 606 is the Toprim domain; that stretch reads SELYVVEGDS…NGHVFLAQPP (115 aa). Mg(2+)-binding residues include Glu-498, Asp-571, and Asp-573.

Belongs to the type II topoisomerase GyrB family. In terms of assembly, heterotetramer, composed of two GyrA and two GyrB chains. In the heterotetramer, GyrA contains the active site tyrosine that forms a transient covalent intermediate with DNA, while GyrB binds cofactors and catalyzes ATP hydrolysis. It depends on Mg(2+) as a cofactor. Mn(2+) is required as a cofactor. The cofactor is Ca(2+).

It is found in the cytoplasm. It carries out the reaction ATP-dependent breakage, passage and rejoining of double-stranded DNA.. Its activity is regulated as follows. DNA supercoiling is inhibited by EDTA, novobiocin, coumermycin and ciprofloxacin. A type II topoisomerase that negatively supercoils closed circular double-stranded DNA in an ATP-dependent manner and also catalyzes the interconversion of other topological isomers of double-stranded DNA rings, including catenanes and knotted rings. Relaxes negatively supercoiled DNA in an ATP-independent manner. A linear reaction intermediate can be trapped in the presence of the antibiotic ciprofloxacin. Negative supercoiling favors strand separation, and DNA replication, transcription, recombination and repair, all of which involve strand separation. Type II topoisomerases break and join 2 DNA strands simultaneously in an ATP-dependent manner. This is DNA gyrase subunit B from Mycobacterium bovis (strain BCG / Pasteur 1173P2).